Here is a 256-residue protein sequence, read N- to C-terminus: Protein FixA (256 aa).

The protein belongs to the ETF beta-subunit/FixA family. As to quaternary structure, heterodimer of FixA and FixB.

The protein operates within amine and polyamine metabolism; carnitine metabolism. Required for anaerobic carnitine reduction. May bring reductant to CaiA. This chain is Protein FixA, found in Escherichia coli O81 (strain ED1a).